We begin with the raw amino-acid sequence, 335 residues long: Erlin-2-A (335 aa).

At 1–2 (MS) the chain is on the cytoplasmic side. Residues 3–23 (HAGAIVGLGVALIAAALFSAI) traverse the membrane as a helical segment. At 24-335 (HKIEEGHVGV…GLDEAASAEE (312 aa)) the chain is on the lumenal side. N106 is a glycosylation site (N-linked (GlcNAc...) asparagine).

Belongs to the band 7/mec-2 family.

Its subcellular location is the endoplasmic reticulum membrane. Its function is as follows. Mediates the endoplasmic reticulum-associated degradation (ERAD) of inositol 1,4,5-trisphosphate receptors (IP3Rs). Promotes sterol-accelerated ERAD of HMGCR. Involved in regulation of cellular cholesterol homeostasis by regulation the SREBP signaling pathway. The polypeptide is Erlin-2-A (erlin2-a) (Xenopus laevis (African clawed frog)).